The sequence spans 426 residues: Glutamate-1-semialdehyde 2,1-aminomutase (426 aa).

Lysine 265 is modified (N6-(pyridoxal phosphate)lysine).

This sequence belongs to the class-III pyridoxal-phosphate-dependent aminotransferase family. HemL subfamily. Homodimer. Pyridoxal 5'-phosphate serves as cofactor.

The protein localises to the cytoplasm. It catalyses the reaction (S)-4-amino-5-oxopentanoate = 5-aminolevulinate. The protein operates within porphyrin-containing compound metabolism; protoporphyrin-IX biosynthesis; 5-aminolevulinate from L-glutamyl-tRNA(Glu): step 2/2. The polypeptide is Glutamate-1-semialdehyde 2,1-aminomutase (Yersinia pseudotuberculosis serotype O:1b (strain IP 31758)).